Reading from the N-terminus, the 101-residue chain is Small ribosomal subunit protein uS14 (101 aa).

It belongs to the universal ribosomal protein uS14 family. As to quaternary structure, part of the 30S ribosomal subunit. Contacts proteins S3 and S10.

In terms of biological role, binds 16S rRNA, required for the assembly of 30S particles and may also be responsible for determining the conformation of the 16S rRNA at the A site. The chain is Small ribosomal subunit protein uS14 from Shewanella halifaxensis (strain HAW-EB4).